A 234-amino-acid chain; its full sequence is Small ribosomal subunit protein uS3 (234 aa).

Residues 39-107 (IRKFLKKELY…EVSINIKEVK (69 aa)) form the KH type-2 domain.

This sequence belongs to the universal ribosomal protein uS3 family. Part of the 30S ribosomal subunit. Forms a tight complex with proteins S10 and S14.

Functionally, binds the lower part of the 30S subunit head. Binds mRNA in the 70S ribosome, positioning it for translation. The sequence is that of Small ribosomal subunit protein uS3 from Helicobacter pylori (strain P12).